Reading from the N-terminus, the 376-residue chain is Putative glutamate--cysteine ligase 2 (376 aa).

The protein belongs to the glutamate--cysteine ligase type 2 family. YbdK subfamily.

It catalyses the reaction L-cysteine + L-glutamate + ATP = gamma-L-glutamyl-L-cysteine + ADP + phosphate + H(+). ATP-dependent carboxylate-amine ligase which exhibits weak glutamate--cysteine ligase activity. The sequence is that of Putative glutamate--cysteine ligase 2 from Corynebacterium glutamicum (strain R).